The sequence spans 83 residues: CLAVATA3/ESR (CLE)-related protein 3 (83 aa).

An N-terminal signal peptide occupies residues 1–24 (MASLKLWVCLVLLLVLELTSVHEC). The stretch at 38–58 (RLKKIRRELFERLKEMKGRSE) forms a coiled coil. Residues 53 to 83 (MKGRSEGEETILGNTLDSKRLSPGGPDPRHH) form a disordered region. Hydroxyproline is present on residues Pro75 and Pro78. O-linked (Ara...) hydroxyproline glycosylation is present at Pro78.

This sequence belongs to the CLV3/ESR signal peptide family. The O-glycosylation (arabinosylation) of the hydroxyproline Pro-78 enhances binding affinity of the CLE3p peptide for its receptor. As to expression, mostly expressed in roots, stems and apex, and, to a lower extent, in seedlings, leaves, flowers, siliques and pollen.

It is found in the secreted. The protein resides in the extracellular space. Functionally, extracellular signal peptide that regulates cell fate. The protein is CLAVATA3/ESR (CLE)-related protein 3 of Arabidopsis thaliana (Mouse-ear cress).